The primary structure comprises 309 residues: Taste receptor type 2 member 20 (309 aa).

The Extracellular segment spans residues 1–6 (MMSFLH). A helical transmembrane segment spans residues 7 to 27 (IVFSILVVVAFILGNFANGFI). The Cytoplasmic segment spans residues 28 to 46 (ALINFIAWVKRQKISSADQ). A helical membrane pass occupies residues 47–67 (IIAALAVSRVGLLWVILLHWY). The Extracellular portion of the chain corresponds to 68 to 79 (STVLNPTSSNLK). The chain crosses the membrane as a helical span at residues 80 to 100 (VTIFISNAWAVTNHFSIWLAA). Over 101 to 125 (SLSIFYLLKIVNFSRLIFHHLKRKA) the chain is Cytoplasmic. A helical membrane pass occupies residues 126–146 (KSVVLVIVLGSLFFLVCHLVM). Topologically, residues 147–178 (KSTYINVWTEEYEGNVTWKIKLRNAMHLSNLT) are extracellular. N-linked (GlcNAc...) asparagine glycans are attached at residues Asn-161 and Asn-176. A helical transmembrane segment spans residues 179–199 (VAMLANLIPFTLTLISFLLLI). The Cytoplasmic segment spans residues 200 to 229 (YSLCKHLKKMQLHGKGSQDPSTKIHIKALQ). A helical membrane pass occupies residues 230–250 (TVTSFLILLAIYFLCLITSFW). Residues 251–259 (NSKMRPKEI) lie on the Extracellular side of the membrane. The chain crosses the membrane as a helical span at residues 260-280 (VLMLCQAFGIIYPSFHSFILI). At 281 to 309 (WGNKTLKQTFLSVLWRVTCWAKGQNQSTP) the chain is on the cytoplasmic side.

Belongs to the G-protein coupled receptor T2R family.

It is found in the membrane. Its function is as follows. Receptor that may play a role in the perception of bitterness and is gustducin-linked. May play a role in sensing the chemical composition of the gastrointestinal content. The activity of this receptor may stimulate alpha gustducin, mediate PLC-beta-2 activation and lead to the gating of TRPM5. This Gorilla gorilla gorilla (Western lowland gorilla) protein is Taste receptor type 2 member 20 (TAS2R20).